A 256-amino-acid polypeptide reads, in one-letter code: Putative adhesin P1-like protein MPN_132 (256 aa).

Residues 56-72 are compositionally biased toward low complexity; the sequence is AVSESQAATSSTTTTAT. Disordered regions lie at residues 56-115 and 149-235; these read AVSE…PYLH and FGTD…EVVG. Residues 96–112 show a composition bias toward polar residues; it reads KASTQGSGQTNSQNTSP. Composition is skewed to low complexity over residues 155–179 and 211–222; these read TQPQ…LGSV and STSDGNTSSTNN.

Belongs to the adhesin P1 family.

The protein is Putative adhesin P1-like protein MPN_132 of Mycoplasma pneumoniae (strain ATCC 29342 / M129 / Subtype 1) (Mycoplasmoides pneumoniae).